The sequence spans 144 residues: Large-conductance mechanosensitive channel (144 aa).

2 helical membrane-spanning segments follow: residues valine 16 to valine 36 and glycine 86 to valine 106.

It belongs to the MscL family. In terms of assembly, homopentamer.

Its subcellular location is the cell inner membrane. Functionally, channel that opens in response to stretch forces in the membrane lipid bilayer. May participate in the regulation of osmotic pressure changes within the cell. The sequence is that of Large-conductance mechanosensitive channel from Cupriavidus metallidurans (strain ATCC 43123 / DSM 2839 / NBRC 102507 / CH34) (Ralstonia metallidurans).